Here is a 105-residue protein sequence, read N- to C-terminus: uncharacterized protein (105 aa).

This is an uncharacterized protein from Escherichia coli (strain K12).